Consider the following 150-residue polypeptide: 1,4-dihydroxy-2-naphthoyl-CoA hydrolase (150 aa).

Asp-19 is an active-site residue.

It belongs to the 4-hydroxybenzoyl-CoA thioesterase family. DHNA-CoA hydrolase subfamily.

The catalysed reaction is 1,4-dihydroxy-2-naphthoyl-CoA + H2O = 1,4-dihydroxy-2-naphthoate + CoA + H(+). It functions in the pathway cofactor biosynthesis; phylloquinone biosynthesis. The protein operates within quinol/quinone metabolism; 1,4-dihydroxy-2-naphthoate biosynthesis; 1,4-dihydroxy-2-naphthoate from chorismate: step 7/7. Its function is as follows. Catalyzes the hydrolysis of 1,4-dihydroxy-2-naphthoyl-CoA (DHNA-CoA) to 1,4-dihydroxy-2-naphthoate (DHNA), a reaction involved in phylloquinone (vitamin K1) biosynthesis. The protein is 1,4-dihydroxy-2-naphthoyl-CoA hydrolase of Prochlorococcus marinus (strain MIT 9515).